Here is a 193-residue protein sequence, read N- to C-terminus: ATP-dependent protease subunit HslV (193 aa).

Residue T12 is part of the active site. Na(+) is bound by residues A167, C170, and T173.

The protein belongs to the peptidase T1B family. HslV subfamily. In terms of assembly, a double ring-shaped homohexamer of HslV is capped on each side by a ring-shaped HslU homohexamer. The assembly of the HslU/HslV complex is dependent on binding of ATP.

The protein localises to the cytoplasm. The catalysed reaction is ATP-dependent cleavage of peptide bonds with broad specificity.. With respect to regulation, allosterically activated by HslU binding. Its function is as follows. Protease subunit of a proteasome-like degradation complex believed to be a general protein degrading machinery. This Bartonella henselae (strain ATCC 49882 / DSM 28221 / CCUG 30454 / Houston 1) (Rochalimaea henselae) protein is ATP-dependent protease subunit HslV.